The following is a 545-amino-acid chain: RAN GTPase-activating protein 2 (545 aa).

The WPP stretch occupies residues Met1 to Asp116. 9 LRR repeats span residues Gly213–Ala236, Leu241–Glu264, Thr269–Arg296, Cys325–Lys348, Phe353–Glu380, Ala382–Ala405, Lys410–Asn433, His439–His462, and Lys467–Lys494. Positions Pro496–Asp545 are disordered. A compositionally biased stretch (acidic residues) spans Asp503 to Glu525.

Belongs to the RNA1 family. Homodimer. Interacts with WIP1 and WIP2 through its WPP domain. Component of Ran complexes at least composed of WIT1 or WIT2, RANGAP1 or RANGAP2, and WIP1 or WIP2 or WIP3. Interacts with WIT1.

The protein localises to the cytoplasm. The protein resides in the nucleus membrane. It is found in the cytoskeleton. Its subcellular location is the spindle. It localises to the phragmoplast. Functionally, GTPase activator for the nuclear Ras-related regulatory protein Ran, converting it to the putatively inactive GDP-bound state. The polypeptide is RAN GTPase-activating protein 2 (RANGAP2) (Arabidopsis thaliana (Mouse-ear cress)).